The chain runs to 339 residues: Anthranilate phosphoribosyltransferase (339 aa).

Residues glycine 79, 82 to 83 (GD), threonine 87, 89 to 92 (NVST), 107 to 115 (KHGNRSVSS), and serine 119 each bind 5-phospho-alpha-D-ribose 1-diphosphate. An anthranilate-binding site is contributed by glycine 79. Serine 91 lines the Mg(2+) pocket. Asparagine 110 is an anthranilate binding site. Arginine 165 provides a ligand contact to anthranilate. Mg(2+) is bound by residues aspartate 224 and glutamate 225.

Belongs to the anthranilate phosphoribosyltransferase family. As to quaternary structure, homodimer. Mg(2+) is required as a cofactor.

The catalysed reaction is N-(5-phospho-beta-D-ribosyl)anthranilate + diphosphate = 5-phospho-alpha-D-ribose 1-diphosphate + anthranilate. It functions in the pathway amino-acid biosynthesis; L-tryptophan biosynthesis; L-tryptophan from chorismate: step 2/5. Catalyzes the transfer of the phosphoribosyl group of 5-phosphorylribose-1-pyrophosphate (PRPP) to anthranilate to yield N-(5'-phosphoribosyl)-anthranilate (PRA). The polypeptide is Anthranilate phosphoribosyltransferase (Caldivirga maquilingensis (strain ATCC 700844 / DSM 13496 / JCM 10307 / IC-167)).